Reading from the N-terminus, the 293-residue chain is Nucleotide-binding protein CKR_3143 (293 aa).

ATP is bound at residue 8–15 (GLSGAGKT). 59–62 (DIRG) is a GTP binding site.

The protein belongs to the RapZ-like family.

Displays ATPase and GTPase activities. The chain is Nucleotide-binding protein CKR_3143 from Clostridium kluyveri (strain NBRC 12016).